Here is a 312-residue protein sequence, read N- to C-terminus: DNA-directed RNA polymerase subunit alpha (312 aa).

Positions 1–226 (MIEFEKPKIT…DHLNLFVDLS (226 aa)) are alpha N-terminal domain (alpha-NTD). Residues 243–312 (TERVLDKIIE…ELGLSLKKRK (70 aa)) are alpha C-terminal domain (alpha-CTD).

This sequence belongs to the RNA polymerase alpha chain family. Homodimer. The RNAP catalytic core consists of 2 alpha, 1 beta, 1 beta' and 1 omega subunit. When a sigma factor is associated with the core the holoenzyme is formed, which can initiate transcription.

It carries out the reaction RNA(n) + a ribonucleoside 5'-triphosphate = RNA(n+1) + diphosphate. In terms of biological role, DNA-dependent RNA polymerase catalyzes the transcription of DNA into RNA using the four ribonucleoside triphosphates as substrates. This Lactococcus lactis subsp. cremoris (strain SK11) protein is DNA-directed RNA polymerase subunit alpha.